The primary structure comprises 233 residues: MKSAVLVFPGINRERDMARALKLVSGHDAAMVWHADTELPNGTDLVVVPGGFSYGDYLRCGAIAARAPVMDAVRKFASDGGLVLGVCNGFQILCESGLLPGVLMRNARLKFICRDVHLRVERNDSPFTRGYAAGQVIKVPVAHGEGNYEADEETVKRLEGDGRVLYRYCSPEGEIGESHNINGAAASIAGIVSERGNVLGMMPHPENHVEDIMGCTDGRGLFAGLVEHLKTAA.

Positions 3-233 constitute a Glutamine amidotransferase type-1 domain; the sequence is SAVLVFPGIN…GLVEHLKTAA (231 aa). The Nucleophile role is filled by C87. Active-site residues include H204 and E206.

As to quaternary structure, part of the FGAM synthase complex composed of 1 PurL, 1 PurQ and 2 PurS subunits.

It is found in the cytoplasm. The enzyme catalyses N(2)-formyl-N(1)-(5-phospho-beta-D-ribosyl)glycinamide + L-glutamine + ATP + H2O = 2-formamido-N(1)-(5-O-phospho-beta-D-ribosyl)acetamidine + L-glutamate + ADP + phosphate + H(+). The catalysed reaction is L-glutamine + H2O = L-glutamate + NH4(+). The protein operates within purine metabolism; IMP biosynthesis via de novo pathway; 5-amino-1-(5-phospho-D-ribosyl)imidazole from N(2)-formyl-N(1)-(5-phospho-D-ribosyl)glycinamide: step 1/2. Its function is as follows. Part of the phosphoribosylformylglycinamidine synthase complex involved in the purines biosynthetic pathway. Catalyzes the ATP-dependent conversion of formylglycinamide ribonucleotide (FGAR) and glutamine to yield formylglycinamidine ribonucleotide (FGAM) and glutamate. The FGAM synthase complex is composed of three subunits. PurQ produces an ammonia molecule by converting glutamine to glutamate. PurL transfers the ammonia molecule to FGAR to form FGAM in an ATP-dependent manner. PurS interacts with PurQ and PurL and is thought to assist in the transfer of the ammonia molecule from PurQ to PurL. The polypeptide is Phosphoribosylformylglycinamidine synthase subunit PurQ (Rhodopseudomonas palustris (strain HaA2)).